Reading from the N-terminus, the 453-residue chain is Plasticin (453 aa).

Residues 1 to 51 (MSHSTFSHLFSPHFGAPVYSPVSSRIGGRYVSSSVPTRSVDFRSRSSAPAP) are head. The tract at residues 71–112 (FATRSNEKRELQELNDRFASFIEKVRHLEQQNSKLILELGQY) is coil 1A. Positions 77–390 (EKRELQELND…KLLEGEENRI (314 aa)) constitute an IF rod domain. The tract at residues 113–126 (KDQHQGSTGRINEL) is linker 1. The segment at 127–222 (CQQEMRELRR…KMHDEEIQDV (96 aa)) is coil 1B. Residues 223–245 (QVSVQSQQMKMEVMETSSRPDLT) are linker 12. The interval 246–391 (GALRDIRAQY…LLEGEENRIV (146 aa)) is coil 2. The tail stretch occupies residues 392-453 (VPIMKMPSMS…KKDSHGQGKD (62 aa)). The disordered stretch occupies residues 421–453 (IKTVETRDGEVVKESTKEKGRDEKKDSHGQGKD). Basic and acidic residues predominate over residues 424–453 (VETRDGEVVKESTKEKGRDEKKDSHGQGKD).

Belongs to the intermediate filament family. Optic nerve.

Functionally, type III neurofilament. The chain is Plasticin from Carassius auratus (Goldfish).